Consider the following 521-residue polypeptide: MEIVISAIIGLLIGGTVVFVIKRLQDNNKKKSARFEAERIVNKANSEAAKIKKESENKAKDFESRARKNVEQDIHKQKSTLKNKESQLERRLKEVEDQFKQKMEENERYLNSLKDREEKIAISENRIKDLEKKGEAHIGELKQKLESVAAMSQDEARRQLLTALEDEAKQEAAKKIAQIEEEANKESEKKAKRILATALSRFASEYTSERTVSVLALPNDEMKGKIIGREGRNIRTLEAHCGVDLIVDDTPEAVVISGFDPVRRELARRTIEKLMEDGRVHPARIEEVAEKQRNELMKSMKEEGERHVMELGIPNMHPELVKIIGGLKYRSYQGQNALNQSLEVATIAGLLAAELGVSVKLARRAGLLHNIGKAIDHTVEGSYAFVGAEAAKKYNESEDVCHAIRAHDEEEKPHSILAWIVHAAYTLSSSRPGARRPQMDTFIHRLEDLESIGNSFDGVLKTLALQAGKDIRVLVESSRVTDDQAVMLSRDIARKIEREMPQAGQVKVTVVRETRSVEHAR.

Residues 1-21 (MEIVISAIIGLLIGGTVVFVI) traverse the membrane as a helical segment. The segment at 51-87 (IKKESENKAKDFESRARKNVEQDIHKQKSTLKNKESQ) is disordered. One can recognise a KH domain in the interval 211-271 (TVSVLALPND…VRRELARRTI (61 aa)). Residues 337–430 (ALNQSLEVAT…VHAAYTLSSS (94 aa)) enclose the HD domain.

It belongs to the RNase Y family.

It is found in the cell membrane. In terms of biological role, endoribonuclease that initiates mRNA decay. This Bdellovibrio bacteriovorus (strain ATCC 15356 / DSM 50701 / NCIMB 9529 / HD100) protein is Ribonuclease Y 1.